The following is a 209-amino-acid chain: Kynurenine formamidase (209 aa).

Phe-19 contributes to the substrate binding site. Positions 49, 53, and 55 each coordinate Zn(2+). His-59 acts as the Proton donor/acceptor in catalysis. Zn(2+) is bound by residues His-160 and Glu-172.

The protein belongs to the Cyclase 1 superfamily. KynB family. Homodimer. Requires Zn(2+) as cofactor.

It catalyses the reaction N-formyl-L-kynurenine + H2O = L-kynurenine + formate + H(+). It functions in the pathway amino-acid degradation; L-tryptophan degradation via kynurenine pathway; L-kynurenine from L-tryptophan: step 2/2. Functionally, catalyzes the hydrolysis of N-formyl-L-kynurenine to L-kynurenine, the second step in the kynurenine pathway of tryptophan degradation. The sequence is that of Kynurenine formamidase from Delftia acidovorans (strain DSM 14801 / SPH-1).